The chain runs to 202 residues: MGHYVSLFITSVFIENMALAYFLGMCTFLAVSKKVSTAIGLGVAVIVVMSITVPLNNLLFQFILKNGALAWAGFPDIDLSFLGLLSYIALIAATVQILEMFLDKFVPSLYNALGVFLPLITVNCAIMGGVLFMVERDYNFTESLTYGVGAGFGWALAIALLAGIREKLKYSDVPAPLRGLGITFITVGLMSLGFMSFGGMSI.

A run of 6 helical transmembrane segments spans residues 5–25 (VSLF…FLGM), 35–55 (VSTA…TVPL), 81–101 (FLGL…LEMF), 114–134 (GVFL…LFMV), 144–164 (LTYG…LAGI), and 180–200 (LGIT…FGGM).

It belongs to the NqrDE/RnfAE family. Composed of six subunits; NqrA, NqrB, NqrC, NqrD, NqrE and NqrF.

The protein resides in the cell inner membrane. The catalysed reaction is a ubiquinone + n Na(+)(in) + NADH + H(+) = a ubiquinol + n Na(+)(out) + NAD(+). Its function is as follows. NQR complex catalyzes the reduction of ubiquinone-1 to ubiquinol by two successive reactions, coupled with the transport of Na(+) ions from the cytoplasm to the periplasm. NqrA to NqrE are probably involved in the second step, the conversion of ubisemiquinone to ubiquinol. In Psychrobacter sp. (strain PRwf-1), this protein is Na(+)-translocating NADH-quinone reductase subunit E.